An 846-amino-acid polypeptide reads, in one-letter code: Aminopeptidase N (846 aa).

Residues glutamate 120 and 252 to 256 (GAMEN) each bind substrate. Histidine 288 serves as a coordination point for Zn(2+). Glutamate 289 functions as the Proton acceptor in the catalytic mechanism. 2 residues coordinate Zn(2+): histidine 292 and glutamate 311.

It belongs to the peptidase M1 family. In terms of assembly, monomer. Zn(2+) serves as cofactor.

The protein resides in the cytoplasm. The enzyme catalyses Release of an N-terminal amino acid, Xaa-|-Yaa- from a peptide, amide or arylamide. Xaa is preferably Ala, but may be most amino acids including Pro (slow action). When a terminal hydrophobic residue is followed by a prolyl residue, the two may be released as an intact Xaa-Pro dipeptide.. Its function is as follows. Aminopeptidase with broad substrate specificity to several peptides. It has more affinity for oligopeptides than for dipeptides. It plays an essential role in the metabolism, it may be involved in nitrogen supply or protein turnover. This is Aminopeptidase N (pepN) from Lactococcus lactis subsp. cremoris (Streptococcus cremoris).